The chain runs to 247 residues: Triosephosphate isomerase (247 aa).

10 to 12 (NWK) provides a ligand contact to substrate. The active-site Electrophile is His-92. Glu-164 serves as the catalytic Proton acceptor. Residues Gly-170, Ser-209, and 230–231 (GG) contribute to the substrate site.

It belongs to the triosephosphate isomerase family. As to quaternary structure, homodimer.

It is found in the cytoplasm. The catalysed reaction is D-glyceraldehyde 3-phosphate = dihydroxyacetone phosphate. It functions in the pathway carbohydrate biosynthesis; gluconeogenesis. The protein operates within carbohydrate degradation; glycolysis; D-glyceraldehyde 3-phosphate from glycerone phosphate: step 1/1. In terms of biological role, involved in the gluconeogenesis. Catalyzes stereospecifically the conversion of dihydroxyacetone phosphate (DHAP) to D-glyceraldehyde-3-phosphate (G3P). The sequence is that of Triosephosphate isomerase from Alcanivorax borkumensis (strain ATCC 700651 / DSM 11573 / NCIMB 13689 / SK2).